A 248-amino-acid chain; its full sequence is MSGHSKWANIKRQKGAADAVRGKIFTKLGREIQIAVRMGGADPSSNSKLKDVIAKCKANNMPNDNIQRSIKRASGETDGSNYEEITYEGYGPGGVAVICECTTDNRNRTAGDLRHYFDKFGGNLGQSGCVSYMFNKKGVIVIEKNDKVNEETLMMEALDAGAEDFDSDDNCYEIITDPADFSTVREALEAKGYEFIEAEVSMIPTTTTKLTDPEQIKFMDKLIEALEDLDDVSNVYHSWEQDEENEEE.

This sequence belongs to the TACO1 family.

Its subcellular location is the cytoplasm. This Ruminiclostridium cellulolyticum (strain ATCC 35319 / DSM 5812 / JCM 6584 / H10) (Clostridium cellulolyticum) protein is Probable transcriptional regulatory protein Ccel_0181.